The sequence spans 311 residues: MNRTRSASMAQGGLNWDSLPLKLFAGGNAKFWNPADIDFSRDRADWERLTDDERSYATRLCAEFIAGEESVTQDIQPFMAAMRAEGRLGDEMYLTQFAFEEAKHVQVFRMWLDAVGVTDDLHHFLDDVPSYRTIFYEELPDCLNALTIDPSPAAQVRASVTYNHMVEGMLALTGYFGWHKICVERGILPGMQELVRRIGDDERRHMAWGTFTCRRHVAADDANWGVFETRMNELMPLGLRLIEEGFALYDPMPFDLSVDEFMAYASDKGMRRFGTIASARGRPLAEIDLDYTPVQLEDTFADEDARALAAV.

Residues glutamate 68, glutamate 101, and histidine 104 each contribute to the Mn(2+) site. A cross-link (3-(O4'-tyrosyl)-valine (Val-Tyr)) is located at residues 71–162 (VTQDIQPFMA…AAQVRASVTY (92 aa)). Glutamate 101 is a binding site for Fe cation. The Fe cation site is built by glutamate 167, glutamate 202, and histidine 205.

Belongs to the ribonucleoside diphosphate reductase small chain family. R2-like ligand binding oxidase subfamily. As to quaternary structure, homodimer. Fe cation serves as cofactor. Mn(2+) is required as a cofactor.

Probable oxidase that might be involved in lipid metabolism. The sequence is that of R2-like ligand binding oxidase from Mycolicibacterium paratuberculosis (strain ATCC BAA-968 / K-10) (Mycobacterium paratuberculosis).